Reading from the N-terminus, the 299-residue chain is GTPase Era (299 aa).

Positions 5-175 (RSGFVCLVGR…IDVLAAALPP (171 aa)) constitute an Era-type G domain. Positions 13-20 (GRPNTGKS) are G1. Residue 13–20 (GRPNTGKS) participates in GTP binding. The segment at 39–43 (QTTRH) is G2. The tract at residues 60-63 (DTPG) is G3. GTP is bound by residues 60–64 (DTPGL) and 124–127 (TKID). The interval 124–127 (TKID) is G4. A G5 region spans residues 154–156 (VSA). The 80-residue stretch at 206–285 (VRDELPHSLA…YLDLRVKVAK (80 aa)) folds into the KH type-2 domain.

Belongs to the TRAFAC class TrmE-Era-EngA-EngB-Septin-like GTPase superfamily. Era GTPase family. As to quaternary structure, monomer.

The protein resides in the cell envelope. It localises to the secreted. The protein localises to the cell wall. Functionally, exhibits GTPase activity. Binds RNA but is probably not involved in ribosome assembly in mycobacteria. This chain is GTPase Era, found in Mycolicibacterium paratuberculosis (strain ATCC BAA-968 / K-10) (Mycobacterium paratuberculosis).